A 342-amino-acid chain; its full sequence is Dysbindin (342 aa).

Ser11 bears the Phosphoserine mark. Positions 83-180 (LSAHWEKKQA…AELDAEHSQK (98 aa)) form a coiled coil. Residues 243–256 (LMDISDQEALDVFL) carry the Nuclear export signal motif. The segment at 263–342 (NTLLSPISGP…ATLHSDDSDS (80 aa)) is disordered. A compositionally biased stretch (low complexity) spans 286-305 (PTPSQAPATPPSSSSPGTDP). Phosphoserine is present on residues Ser316, Ser321, and Ser340.

The protein belongs to the dysbindin family. Interacts (via its coiled coil domain) with KXD1. Interacts with CMYA5, PI4K2 and RNF151. Component of the biogenesis of lysosome-related organelles complex 1 (BLOC-1) composed of at least BLOC1S1, BLOC1S2, BLOC1S3, BLOC1S4, BLOC1S5, BLOC1S6, DTNBP1/BLOC1S7 and SNAPIN/BLOC1S8. Interacts directly in the complex with BLOC1S5, BLOC1S6 and SNAPIN/BLOC1S8. The BLOC-1 complex associates with the AP-3 protein complex and membrane protein cargos. This BLOC-1 complex also associates with the BLOC-2 complex in endosomes. Binds to DTNA and DTNB but may not be a physiological binding partner. Interacts with the DNA-dependent protein kinase complex DNA-PK; the interaction phosphorylates DTNBP1 in vitro. Interacts directly in this complex with XRCC5 and XRCC6. Interacts with AP3M1, AP3B2 and TRIM32. Interacts with XPO1; the interaction exports DTNBP1 out of the nucleus. Post-translationally, ubiquitinated by TRIM32. Ubiquitination leads to DTNBP1 degradation.

The protein localises to the cytoplasm. The protein resides in the cytoplasmic vesicle membrane. It localises to the cytoplasmic vesicle. It is found in the secretory vesicle. Its subcellular location is the synaptic vesicle membrane. The protein localises to the endosome membrane. The protein resides in the melanosome membrane. It localises to the nucleus. It is found in the postsynaptic density. Its subcellular location is the presynaptic cell membrane. The protein localises to the endoplasmic reticulum. Functionally, component of the BLOC-1 complex, a complex that is required for normal biogenesis of lysosome-related organelles (LRO), such as platelet dense granules and melanosomes. In concert with the AP-3 complex, the BLOC-1 complex is required to target membrane protein cargos into vesicles assembled at cell bodies for delivery into neurites and nerve terminals. The BLOC-1 complex, in association with SNARE proteins, is also proposed to be involved in neurite extension. Associates with the BLOC-2 complex to facilitate the transport of TYRP1 independent of AP-3 function. Plays a role in synaptic vesicle trafficking and in neurotransmitter release. Plays a role in the regulation of cell surface exposure of DRD2. May play a role in actin cytoskeleton reorganization and neurite outgrowth. May modulate MAPK8 phosphorylation. Appears to promote neuronal transmission and viability through regulating the expression of SNAP25 and SYN1, modulating PI3-kinase-Akt signaling and influencing glutamatergic release. Regulates the expression of SYN1 through binding to its promoter. Modulates prefrontal cortical activity via the dopamine/D2 pathway. The sequence is that of Dysbindin (DTNBP1) from Bos taurus (Bovine).